Here is a 678-residue protein sequence, read N- to C-terminus: Probable 3',5'-cyclic phosphodiesterase pde-3 (678 aa).

Disordered regions lie at residues 1-27 (MSPGPPAVGGVSPPVMVPGSAPPFQPT), 52-95 (AEMR…VLGG), and 223-250 (TVPAEPNKARSSSYWKTEASPSNNNEHE). A compositionally biased stretch (low complexity) spans 7 to 19 (AVGGVSPPVMVPG). 2 stretches are compositionally biased toward polar residues: residues 60–85 (TATSSPASSGVSIQQRRGSTTQNSGV) and 231–246 (ARSSSYWKTEASPSNN). In terms of domain architecture, PDEase spans 281–632 (RYDTRELDTD…RKWKEQIELE (352 aa)). His-356 serves as the catalytic Proton donor. Residues His-360, His-421, Asp-422, and Asp-531 each contribute to the a divalent metal cation site. The tract at residues 654–678 (EEESASTSDSPDPRRDSPLDSDLSQ) is disordered.

This sequence belongs to the cyclic nucleotide phosphodiesterase family. It depends on a divalent metal cation as a cofactor.

The enzyme catalyses a nucleoside 3',5'-cyclic phosphate + H2O = a nucleoside 5'-phosphate + H(+). The sequence is that of Probable 3',5'-cyclic phosphodiesterase pde-3 (pde-3) from Caenorhabditis elegans.